The sequence spans 156 residues: Ribosomal RNA large subunit methyltransferase H (156 aa).

S-adenosyl-L-methionine is bound by residues leucine 73, glycine 104, and 123–128 (VSSLTL).

Belongs to the RNA methyltransferase RlmH family. Homodimer.

Its subcellular location is the cytoplasm. It catalyses the reaction pseudouridine(1915) in 23S rRNA + S-adenosyl-L-methionine = N(3)-methylpseudouridine(1915) in 23S rRNA + S-adenosyl-L-homocysteine + H(+). In terms of biological role, specifically methylates the pseudouridine at position 1915 (m3Psi1915) in 23S rRNA. This is Ribosomal RNA large subunit methyltransferase H from Burkholderia mallei (strain NCTC 10247).